Reading from the N-terminus, the 404-residue chain is Schlafen-like protein 1 (404 aa).

Disordered regions lie at residues 1–31 (MTPM…LPTE) and 139–170 (GPLS…AWPT). The segment covering 7-16 (SVQTQVSEPF) has biased composition (polar residues). Low complexity predominate over residues 152-165 (GLSPGPNPGSGVPL). Residue 258–265 (GVEDSGLV) participates in ATP binding. Positions 365–395 (RWLVELGKLEERVKVLTMEKEQLQQQLQQHG) form a coiled coil.

Belongs to the Schlafen family. Subgroup I subfamily.

This is Schlafen-like protein 1 (SLFNL1) from Macaca fascicularis (Crab-eating macaque).